Reading from the N-terminus, the 513-residue chain is Maturase K (513 aa).

The protein belongs to the intron maturase 2 family. MatK subfamily.

The protein resides in the plastid. It is found in the chloroplast. Usually encoded in the trnK tRNA gene intron. Probably assists in splicing its own and other chloroplast group II introns. The sequence is that of Maturase K from Cynodon dactylon (Bermuda grass).